The chain runs to 447 residues: Methylenetetrahydrofolate--tRNA-(uracil-5-)-methyltransferase TrmFO (447 aa).

13–18 (GAGLAG) is an FAD binding site.

This sequence belongs to the MnmG family. TrmFO subfamily. FAD serves as cofactor.

It localises to the cytoplasm. The catalysed reaction is uridine(54) in tRNA + (6R)-5,10-methylene-5,6,7,8-tetrahydrofolate + NADH + H(+) = 5-methyluridine(54) in tRNA + (6S)-5,6,7,8-tetrahydrofolate + NAD(+). It carries out the reaction uridine(54) in tRNA + (6R)-5,10-methylene-5,6,7,8-tetrahydrofolate + NADPH + H(+) = 5-methyluridine(54) in tRNA + (6S)-5,6,7,8-tetrahydrofolate + NADP(+). Its function is as follows. Catalyzes the folate-dependent formation of 5-methyl-uridine at position 54 (M-5-U54) in all tRNAs. The chain is Methylenetetrahydrofolate--tRNA-(uracil-5-)-methyltransferase TrmFO from Streptococcus thermophilus (strain ATCC BAA-250 / LMG 18311).